The sequence spans 328 residues: CCAAT/enhancer-binding protein beta (328 aa).

R3 carries the asymmetric dimethylarginine; by CARM1 modification. The residue at position 39 (K39) is an N6-methylated lysine. Positions 165-274 (DSCKGPRKEE…NIAVRKSRDK (110 aa)) are disordered. The segment covering 200-231 (SVPSGSSGNLSTSSSSSPPGTPNPSESSKSAA) has biased composition (low complexity). T220 bears the Phosphothreonine; by RPS6KA1, CDK2 and MAPK mark. Over residues 248 to 264 (KCVDKHSDEYKLRRERN) the composition is skewed to basic and acidic residues. A bZIP domain is found at 254-317 (SDEYKLRRER…STLRNLFKQL (64 aa)). Residues 258–278 (KLRRERNNIAVRKSRDKAKMR) are basic motif. The interval 280–287 (LETQHKVL) is leucine-zipper.

Belongs to the bZIP family. C/EBP subfamily. In terms of assembly, binds DNA as a dimer. Interacts (not methylated) with MED23, MED26, SMARCA2, SMARCB1 and SMARCC1. In terms of processing, methylated. Methylation at Arg-3 by CARM1 and at Lys-39 by EHMT2, inhibit transactivation activity. Methylation is probably inhibited by phosphorylation at Thr-220. As to expression, specifically expressed in myelomoncytic cells.

It localises to the nucleus. Important transcriptional activator regulating the expression of genes involved in immune and inflammatory responses. Binds to regulatory regions of several acute-phase and cytokines genes and probably plays a role in the regulation of acute-phase reaction, inflammation and hemopoiesis. The consensus recognition site is 5'-T[TG]NNGNAA[TG]-3'. Functions in brown adipose tissue (BAT) differentiation. Regulates the transcriptional induction of peroxisome proliferator-activated receptor gamma (PPARG). Binds to the MGF and MIM-1 promoters and activates the transcription of these genes. In terms of biological role, important transcription factor regulating the expression of genes involved in immune and inflammatory responses. Also plays a significant role in adipogenesis, as well as in the gluconeogenic pathway, liver regeneration, and hematopoiesis. The consensus recognition site is 5'-T[TG]NNGNAA[TG]-3'. Its functional capacity is governed by protein interactions and post-translational protein modifications. This Gallus gallus (Chicken) protein is CCAAT/enhancer-binding protein beta (CEBPB).